Reading from the N-terminus, the 159-residue chain is 2-C-methyl-D-erythritol 2,4-cyclodiphosphate synthase (159 aa).

Residues aspartate 8 and histidine 10 each contribute to the a divalent metal cation site. 4-CDP-2-C-methyl-D-erythritol 2-phosphate is bound by residues 8–10 and 34–35; these read DVH and HS. Histidine 42 contacts a divalent metal cation. 4-CDP-2-C-methyl-D-erythritol 2-phosphate is bound by residues 56–58, 100–106, 132–135, phenylalanine 139, and arginine 142; these read DIG, AQAPKMA, and TTTE.

This sequence belongs to the IspF family. As to quaternary structure, homotrimer. The cofactor is a divalent metal cation.

The enzyme catalyses 4-CDP-2-C-methyl-D-erythritol 2-phosphate = 2-C-methyl-D-erythritol 2,4-cyclic diphosphate + CMP. It participates in isoprenoid biosynthesis; isopentenyl diphosphate biosynthesis via DXP pathway; isopentenyl diphosphate from 1-deoxy-D-xylulose 5-phosphate: step 4/6. Involved in the biosynthesis of isopentenyl diphosphate (IPP) and dimethylallyl diphosphate (DMAPP), two major building blocks of isoprenoid compounds. Catalyzes the conversion of 4-diphosphocytidyl-2-C-methyl-D-erythritol 2-phosphate (CDP-ME2P) to 2-C-methyl-D-erythritol 2,4-cyclodiphosphate (ME-CPP) with a corresponding release of cytidine 5-monophosphate (CMP). This Marinobacter nauticus (strain ATCC 700491 / DSM 11845 / VT8) (Marinobacter aquaeolei) protein is 2-C-methyl-D-erythritol 2,4-cyclodiphosphate synthase.